Consider the following 338-residue polypeptide: uncharacterized protein (338 aa).

The tract at residues 1–72 (MASPPILSRE…LNPVEDYDSK (72 aa)) is disordered. Positions 24 to 38 (GGNSEVNIDPSASSS) are enriched in polar residues. The span at 49-58 (ADTKIDPHLL) shows a compositional bias: basic and acidic residues. Residues 59–68 (EEDDLNPVED) are compositionally biased toward acidic residues.

It localises to the cytoplasm. The protein resides in the nucleus. This is an uncharacterized protein from Schizosaccharomyces pombe (strain 972 / ATCC 24843) (Fission yeast).